Here is a 100-residue protein sequence, read N- to C-terminus: UPF0213 protein YhbQ (100 aa).

One can recognise a GIY-YIG domain in the interval 2–77 (TPWYLYLIRT…KQLTKRQKER (76 aa)).

It belongs to the UPF0213 family.

This Escherichia coli O8 (strain IAI1) protein is UPF0213 protein YhbQ.